The following is a 474-amino-acid chain: 6-phospho-beta-galactosidase (474 aa).

D-galactose 6-phosphate-binding residues include glutamine 19, histidine 116, asparagine 159, glutamate 160, and asparagine 297. Glutamate 160 (proton donor) is an active-site residue. The active-site Nucleophile is glutamate 375. D-galactose 6-phosphate contacts are provided by serine 433, tryptophan 434, lysine 440, and tyrosine 442.

This sequence belongs to the glycosyl hydrolase 1 family.

It carries out the reaction a 6-phospho-beta-D-galactoside + H2O = D-galactose 6-phosphate + an alcohol. It functions in the pathway carbohydrate metabolism; lactose degradation; D-galactose 6-phosphate and beta-D-glucose from lactose 6-phosphate: step 1/1. This is 6-phospho-beta-galactosidase from Lacticaseibacillus casei (Lactobacillus casei).